We begin with the raw amino-acid sequence, 371 residues long: Putrescine N-methyltransferase 2 (371 aa).

Composition is skewed to polar residues over residues 1 to 14 and 23 to 70; these read MEVI…STIF and GHQN…HDNG. The disordered stretch occupies residues 1-70; the sequence is MEVISTNTNG…QNGTISHDNG (70 aa). Residues 82–319 enclose the PABS domain; that stretch reads PGWFSEFSAL…GVIGYMLCST (238 aa). Residues Q113, E188, and 219 to 220 contribute to the S-adenosyl-L-methionine site; that span reads DG. D238 functions as the Proton acceptor in the catalytic mechanism. An S-adenosyl-L-methionine-binding site is contributed by Y307.

It belongs to the class I-like SAM-binding methyltransferase superfamily. Spermidine/spermine synthase family. Mainly expressed in roots.

The enzyme catalyses putrescine + S-adenosyl-L-methionine = N-methylputrescine + S-adenosyl-L-homocysteine + H(+). The protein operates within alkaloid biosynthesis; nicotine biosynthesis. In terms of biological role, involved in the biosynthesis of pyridine alkaloid natural products, leading mainly to the production of anabasine, anatabine, nicotine and nornicotine, effective deterrents against herbivores with antiparasitic and pesticide properties (neurotoxins); nornicotine serves as the precursor in the synthesis of the carcinogen compound N'-nitrosonornicotine (NNN). Methyltransferase that mediates the conversion of putrescine to N-methylputrescine. This chain is Putrescine N-methyltransferase 2, found in Nicotiana attenuata (Coyote tobacco).